Reading from the N-terminus, the 598-residue chain is Aspartate--tRNA(Asp/Asn) ligase (598 aa).

Glu175 serves as a coordination point for L-aspartate. An aspartate region spans residues 199 to 202; it reads QQFK. Arg221 and His452 together coordinate L-aspartate. 221–223 contributes to the ATP binding site; the sequence is RDE. Glu486 contacts ATP. An L-aspartate-binding site is contributed by Arg493. 538-541 contacts ATP; sequence GVDR.

It belongs to the class-II aminoacyl-tRNA synthetase family. Type 1 subfamily. In terms of assembly, homodimer.

It localises to the cytoplasm. The enzyme catalyses tRNA(Asx) + L-aspartate + ATP = L-aspartyl-tRNA(Asx) + AMP + diphosphate. In terms of biological role, aspartyl-tRNA synthetase with relaxed tRNA specificity since it is able to aspartylate not only its cognate tRNA(Asp) but also tRNA(Asn). Reaction proceeds in two steps: L-aspartate is first activated by ATP to form Asp-AMP and then transferred to the acceptor end of tRNA(Asp/Asn). The protein is Aspartate--tRNA(Asp/Asn) ligase of Gluconobacter oxydans (strain 621H) (Gluconobacter suboxydans).